We begin with the raw amino-acid sequence, 539 residues long: Glycine betaine transporter 2 (539 aa).

A run of 12 helical transmembrane segments spans residues 44–64, 85–105, 129–149, 175–195, 231–251, 265–285, 299–319, 348–368, 380–400, 426–446, 480–500, and 503–523; these read LTNPVFWLSGSFLSLFVLLAL, FGAYWQVLLLLNFLIGLALAF, IVLCTLLAGGGVFWAAAEPIA, FMHWGFLAWAILGCLSSIVLM, CSIIAVAAGTIGPIGFLGLQI, FITQSMVIVAAIVMYTLSALS, IILSVLLIGYILFFGPTSFII, WWTVFFWGWFIGYGPMMAIFI, LILSISIAAPLITCFWFSIVG, VLLAITGELPFPMIISVLFLI, FWGLMMGVVAIALISMGSGGI, and LQSFIVITAVPVSFILLPSIL.

The protein belongs to the BCCT transporter (TC 2.A.15) family.

It is found in the cell inner membrane. Its function is as follows. Involved in the uptake of the osmoprotectant glycine betaine. In Vibrio parahaemolyticus serotype O3:K6 (strain RIMD 2210633), this protein is Glycine betaine transporter 2.